Reading from the N-terminus, the 121-residue chain is Securin (121 aa).

Residues 1-24 (RATEKSVKTNGPLKQKQTTFSAKK) are disordered. 2 consecutive short sequence motifs (TEK-box) follow at residues 3–5 (TEK) and 26–28 (TEK). The segment at 93–121 (LGPPSPLNMPSPPWESDVLQSPSSILSTL) is disordered. Positions 95-105 (PPSPLNMPSPP) match the SH3-binding motif. Pro residues predominate over residues 95-105 (PPSPLNMPSPP). Ser-97 bears the Phosphoserine; by CDK1 mark. Over residues 110-121 (VLQSPSSILSTL) the composition is skewed to polar residues.

It belongs to the securin family. As to quaternary structure, interacts with the caspase-like ESPL1, and prevents its protease activity probably by covering its active site. Interacts with p53/TP53 and blocks its activity probably by blocking its binding to DNA. Interacts with the Ku 70 kDa subunit of ds-DNA kinase. Interacts with PTTG1IP. Interacts with RPS10 and DNAJA1. Post-translationally, phosphorylated by CDK1 during mitosis. Phosphorylated in vitro by ds-DNA kinase. In terms of processing, ubiquitinated through 'Lys-11' linkage of ubiquitin moieties by the anaphase promoting complex (APC) at the onset of anaphase, conducting to its degradation. 'Lys-11'-linked ubiquitination is mediated by the E2 ligase UBE2C/UBCH10.

The protein resides in the cytoplasm. Its subcellular location is the nucleus. Functionally, regulatory protein, which plays a central role in chromosome stability, in the p53/TP53 pathway, and DNA repair. Probably acts by blocking the action of key proteins. During the mitosis, it blocks Separase/ESPL1 function, preventing the proteolysis of the cohesin complex and the subsequent segregation of the chromosomes. At the onset of anaphase, it is ubiquitinated, conducting to its destruction and to the liberation of ESPL1. Its function is however not limited to a blocking activity, since it is required to activate ESPL1. Negatively regulates the transcriptional activity and related apoptosis activity of p53/TP53. The negative regulation of p53/TP53 may explain the strong transforming capability of the protein when it is overexpressed. May also play a role in DNA repair via its interaction with Ku, possibly by connecting DNA damage-response pathways with sister chromatid separation. This chain is Securin (PTTG1), found in Sus scrofa (Pig).